A 37-amino-acid polypeptide reads, in one-letter code: Large ribosomal subunit protein bL36c (37 aa).

This sequence belongs to the bacterial ribosomal protein bL36 family.

Its subcellular location is the plastid. The protein resides in the chloroplast. In Chlamydomonas reinhardtii (Chlamydomonas smithii), this protein is Large ribosomal subunit protein bL36c (rpl36).